Consider the following 459-residue polypeptide: Vacuolar cation/proton exchanger 3 (459 aa).

Over 1–67 the chain is Cytoplasmic; sequence MGSIVEPWAA…TLKNILSNLQ (67 aa). The chain crosses the membrane as a helical span at residues 68-88; it reads EVILGTKLTLLFLAIPLAILA. The Extracellular portion of the chain corresponds to 89–95; it reads NSYNYGR. Residues 96–116 form a helical membrane-spanning segment; the sequence is PLIFGLSLIGLTPLAERVSFL. Topologically, residues 117–129 are cytoplasmic; the sequence is TEQLAFYTGPTVG. Residues 130–150 form a helical membrane-spanning segment; sequence GLLNATCGNATELIIAILALA. The segment at 137–172 is cation selection; it reads GNATELIIAILALANNKVAVVKYSLLGSILSNLLLV. Residues 151–161 lie on the Extracellular side of the membrane; that stretch reads NNKVAVVKYSL. Residues 162 to 182 form a helical membrane-spanning segment; sequence LGSILSNLLLVLGTSLFFGGI. The Cytoplasmic segment spans residues 183–195; sequence ANIRREQRFDRKQ. Residues 196–216 form a helical membrane-spanning segment; the sequence is ADVNFFLLLMGLLCHLLPLLL. Residues 217-238 lie on the Extracellular side of the membrane; sequence KYAATGEVSTSMINKMSLTLSR. A helical transmembrane segment spans residues 239-259; sequence TSSIVMLIAYIAYLIFQLWTH. Over 260 to 283 the chain is Cytoplasmic; the sequence is RQLFEAQQDDDDAYDDEVSVEETP. The helical transmembrane segment at 284–304 threads the bilayer; the sequence is VIGFWSGFAWLVGMTIVIALL. At 305–327 the chain is on the extracellular side; that stretch reads SEYVVDTIEDASDSWGLSVSFIS. A helical membrane pass occupies residues 328 to 348; sequence IILLPIVGNAAEHAGAIIFAF. The interval 335-370 is cation selection; the sequence is GNAAEHAGAIIFAFKNKLDISLGVALGSATQISLFV. At 349–362 the chain is on the cytoplasmic side; that stretch reads KNKLDISLGVALGS. A helical membrane pass occupies residues 363 to 383; that stretch reads ATQISLFVVPLSVIVAWILGI. The Extracellular portion of the chain corresponds to 384–386; the sequence is KMD. The helical transmembrane segment at 387-407 threads the bilayer; the sequence is LNFNILETSSLALAIIITAFT. The Cytoplasmic segment spans residues 408–417; that stretch reads LQDGTSHYMK. A helical membrane pass occupies residues 418 to 438; that stretch reads GLVLLLCYVIIAACFFVDQIP. Residues 439-459 lie on the Extracellular side of the membrane; it reads QPNDLDVGLQPMNNLGEVFSA.

The protein belongs to the Ca(2+):cation antiporter (CaCA) (TC 2.A.19) family. Cation/proton exchanger (CAX) subfamily. As to expression, expressed in roots, stems and flowers.

It is found in the vacuole membrane. With respect to regulation, inhibited by excess of Ca(2+). Its function is as follows. Vacuolar cation/proton exchanger (CAX). Translocates Ca(2+) and other metal ions into vacuoles using the proton gradient formed by H(+)-ATPase and H(+)-pyrophosphatase. Involved in ion homeostasis in association with CAX1. The polypeptide is Vacuolar cation/proton exchanger 3 (CAX3) (Arabidopsis thaliana (Mouse-ear cress)).